Here is a 640-residue protein sequence, read N- to C-terminus: MSLVSTAPYTYTPLNLLKEGTIANVYGVVKFFKPPYVSKGTDYCSVVTIVDQTNVKLTCMLFSGNYEALPIIYKVGDIVRFHRLKIQVYKNELQGINCSGFASLTFEGTVGMPVTARTSSKVFSFTPQDQKMVEALRVWASKHISASSTLVQLCDAQPMQYYDLTCQLLGKAQVDSTAFLLKVWDGTQTVLPSWRVSTQDLTFEGDLSHIERLQSLVVDILVYDNHVQVARSIEVGCFLRLYSLHTKLQPGNSETSSSESLRLEFHLHGGTSYGRGIRVLPDTSPCVDQLKKALEGANLPVTETSTGICQSENGDSSALSNSGSGAVSPYEEERCQQVSATILTNHQHLEKTPLCAILTQKAPQQYRVRAKLRSYLPRRLSQSVKLLCPKCHSVQEVPHGDSLDKILQDAATEAPDIKLKATSLYYSKVWTTEDQGGRQVAVHFVKNNGILPASSECLILIEGGRLCEVSKLSSKFHSVMPVRSGPESLELLTLSAPFLIQGKVHHYGCKQCSSLKPIQNLNSRFHKGPWTPSSVAEALGVVPLQYVFVMVFTLDDGTGVLEAYLKDSEHFFKIPASEVLTDDDLQRSLETIMDMICPPGIKVDAYPWLECLLKSYNVTIGTERRICYQIFDTTVAENVV.

This sequence belongs to the telombin family. Homodimer or homooligomer. Component of the shelterin complex (telosome) composed of TERF1, TERF2, TINF2, TERF2IP, ACD and POT1. Binds single-stranded telomeric DNA as a monomer. Associated component of the telomerase holoenzyme complex. Found in a complex with TERF1, TINF2 and TNKS1. Interacts with TNKS1. Forms heterodimers with ACD. Identified in a complex with ACD and single-stranded telomeric DNA.

Its subcellular location is the nucleus. It localises to the chromosome. The protein localises to the telomere. Functionally, component of the telomerase ribonucleoprotein (RNP) complex that is essential for the replication of chromosome termini. Is a component of the double-stranded telomeric DNA-binding TRF1 complex which is involved in the regulation of telomere length by cis-inhibition of telomerase. Also acts as a single-stranded telomeric DNA-binding protein and thus may act as a downstream effector of the TRF1 complex and may transduce information about telomere maintenance and/or length to the telomere terminus. Component of the shelterin complex (telosome) that is involved in the regulation of telomere length and protection. Shelterin associates with arrays of double-stranded TTAGGG repeats added by telomerase and protects chromosome ends; without its protective activity, telomeres are no longer hidden from the DNA damage surveillance and chromosome ends are inappropriately processed by DNA repair pathways. Binds to two or more telomeric single-stranded 5'-TTAGGG-3' repeats (G-strand) and with high specificity to a minimal telomeric single-stranded 5'-TAGGGTTAG-3' sequence. Binds telomeric single-stranded sequences internally or at proximity of a 3'-end. Its activity is TERT dependent but it does not increase TERT activity. This chain is Protection of telomeres protein 1 (Pot1), found in Mus musculus (Mouse).